The chain runs to 270 residues: Shikimate dehydrogenase (NADP(+)) (270 aa).

Residues 14–16 and threonine 61 each bind shikimate; that span reads SKS. Lysine 65 serves as the catalytic Proton acceptor. Shikimate is bound by residues asparagine 86 and aspartate 101. NADP(+) contacts are provided by residues 126-130, 150-155, and methionine 213; these read GAGGA and NRTVSK. Tyrosine 215 is a binding site for shikimate. An NADP(+)-binding site is contributed by glycine 237.

The protein belongs to the shikimate dehydrogenase family. Homodimer.

The enzyme catalyses shikimate + NADP(+) = 3-dehydroshikimate + NADPH + H(+). The protein operates within metabolic intermediate biosynthesis; chorismate biosynthesis; chorismate from D-erythrose 4-phosphate and phosphoenolpyruvate: step 4/7. Its function is as follows. Involved in the biosynthesis of the chorismate, which leads to the biosynthesis of aromatic amino acids. Catalyzes the reversible NADPH linked reduction of 3-dehydroshikimate (DHSA) to yield shikimate (SA). This chain is Shikimate dehydrogenase (NADP(+)), found in Hahella chejuensis (strain KCTC 2396).